A 1608-amino-acid chain; its full sequence is Mitogen-activated protein kinase kinase kinase 4 (1608 aa).

Residues 1–23 are compositionally biased toward low complexity; that stretch reads MREAAAALVPPPAFAVTPAAAME. 2 disordered regions span residues 1 to 136 and 429 to 478; these read MREA…ENVE and IPSP…RQPI. Positions 24 to 37 are enriched in pro residues; that stretch reads EPPPPPPPPPPPPE. Positions 66–76 are enriched in acidic residues; sequence SDLEDFSDETN. Ser-84 is subject to Phosphoserine. Residues 91–101 show a composition bias toward basic residues; it reads QMKRMSTKHQR. The residue at position 431 (Ser-431) is a Phosphoserine. Thr-447 bears the Phosphothreonine mark. A phosphoserine mark is found at Ser-456 and Ser-457. Acidic residues predominate over residues 456-466; it reads SSTDESEEEQI. Thr-458 carries the post-translational modification Phosphothreonine. Ser-461, Ser-481, and Ser-499 each carry phosphoserine. 3 disordered regions span residues 1157-1190, 1202-1231, and 1244-1274; these read CHSD…GSPA, ASRP…SVPE, and FRSL…TRRS. Positions 1217-1230 are enriched in polar residues; that stretch reads SISSAHDTRGSSVP. Residues Ser-1252 and Ser-1274 each carry the phosphoserine modification. Positions 1252 to 1261 are enriched in basic and acidic residues; the sequence is SPTEERDEPA. The Protein kinase domain maps to 1343 to 1601; sequence WQRGNKIGEG…ASQLLDHSFV (259 aa). ATP contacts are provided by residues 1349–1357 and Lys-1372; that span reads IGEGQYGKV. Catalysis depends on Asp-1463, which acts as the Proton acceptor.

Belongs to the protein kinase superfamily. STE Ser/Thr protein kinase family. MAP kinase kinase kinase subfamily. In terms of assembly, monomer and homodimer. Homodimerization enhances kinase activity. Interacts with TRAF4; this promotes homodimerization. Binds both upstream activators and downstream substrates in multimolecular complexes. Interacts with AXIN1 and DIXDC1; interaction with DIXDC1 prevents interaction with AXIN1. Interacts with GADD45 and MAP2K6. Interacts with ZFP36; this interaction enhances the association with SH3KBP1/CIN85. Interacts with SH3KBP1; this interaction enhances the association with ZFP36. Interacts with CDC42. It depends on Mg(2+) as a cofactor. As to expression, expressed at high levels in heart, placenta, skeletal muscle and pancreas, and at lower levels in other tissues.

The protein resides in the cytoplasm. It is found in the perinuclear region. It catalyses the reaction L-seryl-[protein] + ATP = O-phospho-L-seryl-[protein] + ADP + H(+). The catalysed reaction is L-threonyl-[protein] + ATP = O-phospho-L-threonyl-[protein] + ADP + H(+). With respect to regulation, N-terminal autoinhibitory domain interacts with the C-terminal kinase domain, inhibiting kinase activity, and preventing interaction with its substrate, MAP2K6. The GADD45 proteins activate the kinase by binding to the N-terminal domain. Activated by phosphorylation on Thr-1505. Functionally, component of a protein kinase signal transduction cascade. Activates the CSBP2, P38 and JNK MAPK pathways, but not the ERK pathway. Specifically phosphorylates and activates MAP2K4 and MAP2K6. The sequence is that of Mitogen-activated protein kinase kinase kinase 4 (MAP3K4) from Homo sapiens (Human).